Consider the following 557-residue polypeptide: Probable tRNA-splicing endonuclease subunit tsp-5 (557 aa).

Disordered stretches follow at residues 1-36 (MPLD…MMDE), 131-152 (KLTK…DRKL), 225-252 (SVPA…EDDD), 370-403 (PSST…SDSP), and 514-557 (SGGP…GRGN). Over residues 131–140 (KLTKRGKEGA) the composition is skewed to basic and acidic residues. The segment covering 370-381 (PSSTSSSASPTA) has biased composition (low complexity). Composition is skewed to gly residues over residues 517–527 (PRRGGGGGGKK) and 538–549 (GRGGGRGGGRGG).

The protein belongs to the SEN54 family. TRNA splicing endonuclease is a heterotetramer composed of tsp-2/sen2, tsp-1/sen15, tsp-4/sen34 and tsp-5/sen54. Interacts directly with tsp-2/sen2.

In terms of biological role, non-catalytic subunit of the tRNA-splicing endonuclease complex, a complex responsible for identification and cleavage of the splice sites in pre-tRNA. It cleaves pre-tRNA at the 5' and 3' splice sites to release the intron. The products are an intron and two tRNA half-molecules bearing 2',3' cyclic phosphate and 5'-OH termini. There are no conserved sequences at the splice sites, but the intron is invariably located at the same site in the gene, placing the splice sites an invariant distance from the constant structural features of the tRNA body. May be required to embody the molecular ruler of the complex. In Neurospora crassa (strain ATCC 24698 / 74-OR23-1A / CBS 708.71 / DSM 1257 / FGSC 987), this protein is Probable tRNA-splicing endonuclease subunit tsp-5 (tsp-5).